Consider the following 395-residue polypeptide: Elongation factor Tu (395 aa).

In terms of domain architecture, tr-type G spans 6-205 (KPHINVGTIG…NALEKIDLPI (200 aa)). A G1 region spans residues 15 to 22 (GHVDHGKT). 15-22 (GHVDHGKT) lines the GTP pocket. Residue Thr22 coordinates Mg(2+). Residues 59-63 (GITIS) form a G2 region. The G3 stretch occupies residues 80-83 (DCPG). GTP-binding positions include 80–84 (DCPGH) and 135–138 (NKCD). The interval 135–138 (NKCD) is G4. The G5 stretch occupies residues 173–175 (SAV).

Belongs to the TRAFAC class translation factor GTPase superfamily. Classic translation factor GTPase family. EF-Tu/EF-1A subfamily. Monomer.

The protein localises to the cytoplasm. The catalysed reaction is GTP + H2O = GDP + phosphate + H(+). In terms of biological role, GTP hydrolase that promotes the GTP-dependent binding of aminoacyl-tRNA to the A-site of ribosomes during protein biosynthesis. The chain is Elongation factor Tu from Ehrlichia ruminantium (strain Gardel).